We begin with the raw amino-acid sequence, 308 residues long: Probable dimethyladenosine transferase (308 aa).

Over residues 1 to 11 (MGKTSKVKKTK) the composition is skewed to basic residues. Residues 1–24 (MGKTSKVKKTKAGSSTGNVQSLPF) are disordered. Residues 12-24 (AGSSTGNVQSLPF) are compositionally biased toward polar residues. S-adenosyl-L-methionine contacts are provided by His31, Leu33, Gly58, Glu79, Asp107, and Asn122.

Belongs to the class I-like SAM-binding methyltransferase superfamily. rRNA adenine N(6)-methyltransferase family. In terms of assembly, part of the small subunit (SSU) processome, composed of more than 70 proteins and the RNA chaperone small nucleolar RNA (snoRNA) U3.

It localises to the nucleus. Its subcellular location is the nucleolus. The catalysed reaction is adenosine(1779)/adenosine(1780) in 18S rRNA + 4 S-adenosyl-L-methionine = N(6)-dimethyladenosine(1779)/N(6)-dimethyladenosine(1780) in 18S rRNA + 4 S-adenosyl-L-homocysteine + 4 H(+). Functionally, specifically dimethylates two adjacent adenosines in the loop of a conserved hairpin near the 3'-end of 18S rRNA in the 40S particle. Involved in the pre-rRNA processing steps leading to small-subunit rRNA production independently of its RNA-modifying catalytic activity. Part of the small subunit (SSU) processome, first precursor of the small eukaryotic ribosomal subunit. During the assembly of the SSU processome in the nucleolus, many ribosome biogenesis factors, an RNA chaperone and ribosomal proteins associate with the nascent pre-rRNA and work in concert to generate RNA folding, modifications, rearrangements and cleavage as well as targeted degradation of pre-ribosomal RNA by the RNA exosome. This is Probable dimethyladenosine transferase from Caenorhabditis elegans.